We begin with the raw amino-acid sequence, 407 residues long: MLRWITAGESHGRALVALVDGMVAGVEVTSTEIADQLARRRLGYGRGARMAFERDAVTVLSGIRHGSTLGGPIAIEIGNTEWPKWEAVMAADPLDPAAAAELENSARNAPLTRPRPGHADYAGMLKYGFDDARPVLERASARETAARVAAGTVARAFLRQALGVEVLSHVVSIGASAPYDGPPPQPEDLLAIDASPVRAFDGQAEKSMIAEIEAAKKDGDTLGGVVEVVALGLPVGLGSFTSGENRLDSQLAAAVMGIQAIKGVEIGDGFETARRRGSRAHDEMYPGTDGVVRSTNRAGGLEGGMTNGQPLRVRAAMKPISTVPKALATVDLATGDEAVAIHQRSDVCAVPAAAVVVETMVALVLARVTLEKFGGDSLAETRRNIEAYQRSVADREAPAARARAIRG.

Residues R40 and R46 each contribute to the NADP(+) site. FMN is bound by residues R138–S140 and Q259–A260. The segment covering R275–M284 has biased composition (basic and acidic residues). The tract at residues R275 to G308 is disordered. FMN contacts are provided by residues G303, K318–T322, and R344.

It belongs to the chorismate synthase family. Homotetramer. FMNH2 serves as cofactor.

It carries out the reaction 5-O-(1-carboxyvinyl)-3-phosphoshikimate = chorismate + phosphate. It functions in the pathway metabolic intermediate biosynthesis; chorismate biosynthesis; chorismate from D-erythrose 4-phosphate and phosphoenolpyruvate: step 7/7. Functionally, catalyzes the anti-1,4-elimination of the C-3 phosphate and the C-6 proR hydrogen from 5-enolpyruvylshikimate-3-phosphate (EPSP) to yield chorismate, which is the branch point compound that serves as the starting substrate for the three terminal pathways of aromatic amino acid biosynthesis. This reaction introduces a second double bond into the aromatic ring system. In Mycobacterium ulcerans (strain Agy99), this protein is Chorismate synthase.